Reading from the N-terminus, the 70-residue chain is Large ribosomal subunit protein bL28c (70 aa).

Belongs to the bacterial ribosomal protein bL28 family.

It is found in the plastid. Its subcellular location is the cyanelle. The protein is Large ribosomal subunit protein bL28c (rpl28) of Cyanophora paradoxa.